A 225-amino-acid polypeptide reads, in one-letter code: Non-structural protein V (225 aa).

Residues proline 65–lysine 72 are nuclear localization signal. The span at serine 145 to aspartate 157 shows a compositional bias: polar residues. A disordered region spans residues serine 145–asparagine 173. Zn(2+) contacts are provided by histidine 174, cysteine 193, cysteine 197, cysteine 209, cysteine 211, cysteine 214, cysteine 218, and cysteine 221.

This sequence belongs to the paramyxoviruses V protein family. In terms of assembly, interacts with host IFIH1/MDA5 and DHX58/LGP2. Forms with host DDB1, CUL4A, STAT1 and STAT2 the HPIV2 virus V-dependent complex (VDC); this complex targets host STAT2 to proteasomal degradation.

The protein localises to the host nucleus. Plays an essential role in the inhibition of host immune response. Prevents the establishment of cellular antiviral state by blocking interferon-alpha/beta (IFN-alpha/beta) production and signaling pathway. Interacts with host IFIH1/MDA5 and DHX58/LGP2 to inhibit the transduction pathway involved in the activation of IFN-beta promoter, thus protecting the virus against cell antiviral state. Efficiently blocks type I IFN signaling following infection by targeting host STAT2 for proteasomal degradation. Also plays a role in viral growth by promoting host RhoA-induced F-actin formation. This chain is Non-structural protein V (P/V), found in Homo sapiens (Human).